Reading from the N-terminus, the 441-residue chain is Serum response factor-binding protein 1 (441 aa).

2 coiled-coil regions span residues 52–77 (KGTEDALLKNQRRAQRLLEEIHAMKE) and 118–140 (LLKKKIDVLKDAVQAFKDARQSA). 3 disordered regions span residues 137 to 342 (RQSA…RNDK), 357 to 389 (FHSLAGPKSSRRDPREQAPKNKAPDFPENEPPV), and 406 to 441 (QTMQAPLHPSWEASRRRKEQQSKIAVFQGKKITFDD). A compositionally biased stretch (low complexity) spans 139–152 (SAPAAESSESTSGE). Over residues 153–183 (GRCKDIARSKDDARESQHPERTVVREQKAKD) the composition is skewed to basic and acidic residues. Residue Lys-201 forms a Glycyl lysine isopeptide (Lys-Gly) (interchain with G-Cter in SUMO2) linkage. Phosphoserine is present on Ser-214. Residues 237-246 (DSNQGKASTK) show a composition bias toward polar residues. Basic and acidic residues predominate over residues 269 to 282 (EKEYFDDSTEERFY). 3 positions are modified to phosphoserine: Ser-276, Ser-291, and Ser-293. Positions 308-321 (KESGVHSSAKELKP) are enriched in basic and acidic residues. Lys-328 participates in a covalent cross-link: Glycyl lysine isopeptide (Lys-Gly) (interchain with G-Cter in SUMO2). The span at 366–381 (SRRDPREQAPKNKAPD) shows a compositional bias: basic and acidic residues.

In terms of assembly, interacts with SRF. Forms complexes with SRF and SRF cofactors ARID2, MYOCD and NKX2-5. Interacts with the N-terminus of SLC2A4. In terms of tissue distribution, highly expressed in heart, skeletal muscle, liver, kidney, testis and brain. Also expressed in white adipose tissue. Expression is up-regulated in cardiomyopathic heart.

The protein localises to the cytoplasm. It is found in the perinuclear region. May be involved in regulating transcriptional activation of cardiac genes during the aging process. May play a role in biosynthesis and/or processing of SLC2A4 in adipose cells. The chain is Serum response factor-binding protein 1 from Mus musculus (Mouse).